The sequence spans 96 residues: Protein C4 (96 aa).

The N-myristoyl glycine; by host moiety is linked to residue glycine 2. Residues 66-96 (STDDLQGEDSRQPMTLTPRQLTQDVSRRLLM) are disordered. Positions 77–89 (QPMTLTPRQLTQD) are enriched in polar residues.

Belongs to the geminiviridae protein AC4/C4 family.

Its subcellular location is the host cell membrane. In terms of biological role, pathogenicity determinant. May act as a suppressor of RNA-mediated gene silencing, also known as post-transcriptional gene silencing (PTGS), a mechanism of plant viral defense that limits the accumulation of viral RNAs. This chain is Protein C4, found in Solanum lycopersicum (Tomato).